The primary structure comprises 515 residues: Bifunctional purine biosynthesis protein PurH (515 aa).

Positions 1–145 (MTKRALISVS…KNHASVTVVV (145 aa)) constitute an MGS-like domain.

This sequence belongs to the PurH family.

It carries out the reaction (6R)-10-formyltetrahydrofolate + 5-amino-1-(5-phospho-beta-D-ribosyl)imidazole-4-carboxamide = 5-formamido-1-(5-phospho-D-ribosyl)imidazole-4-carboxamide + (6S)-5,6,7,8-tetrahydrofolate. The catalysed reaction is IMP + H2O = 5-formamido-1-(5-phospho-D-ribosyl)imidazole-4-carboxamide. It functions in the pathway purine metabolism; IMP biosynthesis via de novo pathway; 5-formamido-1-(5-phospho-D-ribosyl)imidazole-4-carboxamide from 5-amino-1-(5-phospho-D-ribosyl)imidazole-4-carboxamide (10-formyl THF route): step 1/1. Its pathway is purine metabolism; IMP biosynthesis via de novo pathway; IMP from 5-formamido-1-(5-phospho-D-ribosyl)imidazole-4-carboxamide: step 1/1. This is Bifunctional purine biosynthesis protein PurH from Streptococcus pyogenes serotype M3 (strain ATCC BAA-595 / MGAS315).